Reading from the N-terminus, the 332-residue chain is Thiamine thiazole synthase (332 aa).

Residues C87, 108–109 (EA), G116, and V184 each bind substrate. C221 carries the 2,3-didehydroalanine (Cys) modification. Substrate is bound by residues D223, H238, M290, and 300-302 (RMG).

It belongs to the THI4 family. In terms of assembly, homooctamer. It depends on Fe cation as a cofactor. Post-translationally, during the catalytic reaction, a sulfide is transferred from Cys-221 to a reaction intermediate, generating a dehydroalanine residue.

The protein localises to the cytoplasm. Its subcellular location is the nucleus. It carries out the reaction [ADP-thiazole synthase]-L-cysteine + glycine + NAD(+) = [ADP-thiazole synthase]-dehydroalanine + ADP-5-ethyl-4-methylthiazole-2-carboxylate + nicotinamide + 3 H2O + 2 H(+). Functionally, involved in biosynthesis of the thiamine precursor thiazole. Catalyzes the conversion of NAD and glycine to adenosine diphosphate 5-(2-hydroxyethyl)-4-methylthiazole-2-carboxylic acid (ADT), an adenylated thiazole intermediate. The reaction includes an iron-dependent sulfide transfer from a conserved cysteine residue of the protein to a thiazole intermediate. The enzyme can only undergo a single turnover, which suggests it is a suicide enzyme. May have additional roles in adaptation to various stress conditions and in DNA damage tolerance. The sequence is that of Thiamine thiazole synthase from Aspergillus fumigatus (strain ATCC MYA-4609 / CBS 101355 / FGSC A1100 / Af293) (Neosartorya fumigata).